Consider the following 729-residue polypeptide: Fatty acid oxidation complex subunit alpha (729 aa).

The enoyl-CoA hydratase/isomerase stretch occupies residues 1–189 (MLYKGDTLYL…KIGLVDGVVK (189 aa)). Aspartate 296 is a binding site for substrate. The tract at residues 311–729 (ETPKQAAVLG…ARPVGSLKTA (419 aa)) is 3-hydroxyacyl-CoA dehydrogenase. Residues methionine 324, aspartate 343, 400–402 (VVE), lysine 407, and serine 429 each bind NAD(+). The active-site For 3-hydroxyacyl-CoA dehydrogenase activity is the histidine 450. Asparagine 453 is an NAD(+) binding site. Positions 500 and 660 each coordinate substrate. Positions 708-729 (RHNEPYYPPVEPARPVGSLKTA) are disordered.

The protein in the N-terminal section; belongs to the enoyl-CoA hydratase/isomerase family. It in the C-terminal section; belongs to the 3-hydroxyacyl-CoA dehydrogenase family. In terms of assembly, heterotetramer of two alpha chains (FadB) and two beta chains (FadA).

It carries out the reaction a (3S)-3-hydroxyacyl-CoA + NAD(+) = a 3-oxoacyl-CoA + NADH + H(+). The enzyme catalyses a (3S)-3-hydroxyacyl-CoA = a (2E)-enoyl-CoA + H2O. It catalyses the reaction a 4-saturated-(3S)-3-hydroxyacyl-CoA = a (3E)-enoyl-CoA + H2O. The catalysed reaction is (3S)-3-hydroxybutanoyl-CoA = (3R)-3-hydroxybutanoyl-CoA. It carries out the reaction a (3Z)-enoyl-CoA = a 4-saturated (2E)-enoyl-CoA. The enzyme catalyses a (3E)-enoyl-CoA = a 4-saturated (2E)-enoyl-CoA. It participates in lipid metabolism; fatty acid beta-oxidation. Involved in the aerobic and anaerobic degradation of long-chain fatty acids via beta-oxidation cycle. Catalyzes the formation of 3-oxoacyl-CoA from enoyl-CoA via L-3-hydroxyacyl-CoA. It can also use D-3-hydroxyacyl-CoA and cis-3-enoyl-CoA as substrate. This is Fatty acid oxidation complex subunit alpha from Salmonella agona (strain SL483).